Here is a 352-residue protein sequence, read N- to C-terminus: MLREFSFYDVPPAHVPPVSEPLEIACYSLSRDRELLLDDSKLSYYYPPPLFSDLNTGFPNRFHPPKSDPDPISIVKDVLMTKGIQMNSSFLTWRGLITKIMCAPLDPRNHWETYLVMDPTSGIIMMEERTRSETSYANQDRMCYWGYKFEAISTLPEIWDACSRDQIEQRDNQDVVPDEQYCSIVKINIGKSKLILAGEVDCIWDKKPCSAKESDVHSDDGTIEEDASNAENPNLHYVELKTSKKYPLENYGMRKKLLKYWAQSFLLGIGRIIIGFRDDNGILIEMKELFTHQIPKMLRPYFKPNDWTPNRLLVVLEHALEWIKQTVKQHPPSTEFTLSYTGGSKLVLRQII.

Residues R33 and 93–95 each bind substrate; that span reads WRG. Residue E150 coordinates a divalent metal cation. Substrate contacts are provided by C182 and E199. An a divalent metal cation-binding site is contributed by D201. Position 218 is a phosphoserine (S218). A divalent metal cation-binding residues include E239 and L240. Substrate is bound by residues K241 and Q263.

The protein belongs to the DXO/Dom3Z family. As to quaternary structure, interacts with dhp1/Rat1; the interaction is direct, stabilizes dhp1 protein structure and stimulates its exoribonuclease activity. The interaction also stimulates din1 pyrophosphohydrolase activity, probably by recruiting it to mRNA substrates. Requires a divalent metal cation as cofactor.

The protein localises to the nucleus. It carries out the reaction a 5'-end NAD(+)-phospho-ribonucleoside in mRNA + H2O = a 5'-end phospho-ribonucleoside in mRNA + NAD(+) + H(+). The enzyme catalyses a 5'-end (N(7)-methyl 5'-triphosphoguanosine)-ribonucleoside-ribonucleotide in mRNA + H2O = a (N(7)-methyl 5'-triphosphoguanosine)-nucleoside + a 5'-end phospho-ribonucleoside in mRNA + H(+). The catalysed reaction is a 5'-end triphospho-ribonucleoside in mRNA + H2O = a 5'-end phospho-ribonucleoside in mRNA + diphosphate + H(+). Functionally, decapping enzyme for NAD-capped RNAs: specifically hydrolyzes the nicotinamide adenine dinucleotide (NAD) cap from a subset of RNAs by removing the entire NAD moiety from the 5'-end of an NAD-capped RNA. The NAD-cap is present at the 5'-end of some RNAs and snoRNAs. In contrast to the canonical 5'-end N7 methylguanosine (m7G) cap, the NAD cap promotes mRNA decay. Also acts as a non-canonical decapping enzyme that removes the entire cap structure of m7G capped or incompletely capped RNAs and mediates their subsequent degradation. Specifically degrades pre-mRNAs with a defective m7G cap and is part of a pre-mRNA capping quality control. Has decapping activity toward incomplete 5'-end m7G cap mRNAs such as unmethylated 5'-end-capped RNA (cap0), while it has no activity toward 2'-O-ribose methylated m7G cap (cap1). Also possesses RNA 5'-pyrophosphohydrolase activity by hydrolyzing the 5'-end triphosphate to release pyrophosphates. Stimulates exoribonuclease activity of dhp1, allowing it to degrade RNAs with stable secondary structure more effectively. The protein is Decapping nuclease din1 of Schizosaccharomyces pombe (strain 972 / ATCC 24843) (Fission yeast).